A 244-amino-acid chain; its full sequence is Putative ABC transporter ATP-binding protein gll0289 (244 aa).

Positions 5 to 237 (LVVEELHYSY…RVLLETHGLE (233 aa)) constitute an ABC transporter domain. ATP is bound at residue 38–45 (GPNGSGKS).

The protein belongs to the ABC transporter superfamily.

It is found in the cell inner membrane. Its function is as follows. Probably part of an ABC transporter complex. Responsible for energy coupling to the transport system. This is Putative ABC transporter ATP-binding protein gll0289 from Gloeobacter violaceus (strain ATCC 29082 / PCC 7421).